Here is a 621-residue protein sequence, read N- to C-terminus: (-)-beta-phellandrene synthase 1, chloroplastic (621 aa).

The N-terminal 49 residues, 1–49 (MALALVSVAPLVSMRRSLFSSPYELKSIDKTIPNLVMCRKRMSGTPSIR), are a transit peptide targeting the chloroplast. The Mg(2+) site is built by aspartate 372, aspartate 376, and aspartate 524. The DDXXD motif motif lies at 372–376 (DDIYD).

This sequence belongs to the terpene synthase family. Tpsd subfamily. It depends on Mg(2+) as a cofactor. Requires Mn(2+) as cofactor.

The protein localises to the plastid. The protein resides in the chloroplast. It carries out the reaction (2E)-geranyl diphosphate = (-)-beta-phellandrene + diphosphate. It functions in the pathway terpene metabolism; oleoresin biosynthesis. The protein operates within secondary metabolite biosynthesis; terpenoid biosynthesis. Its function is as follows. Monoterpene synthase (TPS) involved in the biosynthesis of monoterpene natural products included in conifer oleoresin secretions and volatile emissions; these compounds contribute to biotic and abiotic stress defense against herbivores and pathogens. Catalyzes the conversion of (2E)-geranyl diphosphate (GPP) to (-)-beta-phellandrene and, to a lower extent, to (-)-alpha-phellandrene. The sequence is that of (-)-beta-phellandrene synthase 1, chloroplastic from Pinus contorta (Shore pine).